The primary structure comprises 460 residues: Chromosomal replication initiator protein DnaA 2 (460 aa).

Residues 1–68 (MRAWEDFLLL…KTSLVNNNGK (68 aa)) form a domain I, interacts with DnaA modulators region. Residues 68-102 (KLIRVHITSLDKTAPFYKEKQIQQEKTAYFTMQYG) are domain II. The tract at residues 103-321 (NVNPEMTFGN…DALKLLSKRV (219 aa)) is domain III, AAA+ region. Residues glycine 151, glycine 153, lysine 154, and threonine 155 each coordinate ATP. Residues 322-460 (AYKKLAQQLL…EFFPEEEISC (139 aa)) form a domain IV, binds dsDNA region.

This sequence belongs to the DnaA family. As to quaternary structure, oligomerizes as a right-handed, spiral filament on DNA at oriC.

Its subcellular location is the cytoplasm. Functionally, plays an essential role in the initiation and regulation of chromosomal replication. ATP-DnaA binds to the origin of replication (oriC) to initiate formation of the DNA replication initiation complex once per cell cycle. Binds the DnaA box (a 9 base pair repeat at the origin) and separates the double-stranded (ds)DNA. Forms a right-handed helical filament on oriC DNA; dsDNA binds to the exterior of the filament while single-stranded (ss)DNA is stabiized in the filament's interior. The ATP-DnaA-oriC complex binds and stabilizes one strand of the AT-rich DNA unwinding element (DUE), permitting loading of DNA polymerase. After initiation quickly degrades to an ADP-DnaA complex that is not apt for DNA replication. Binds acidic phospholipids. The chain is Chromosomal replication initiator protein DnaA 2 from Chlamydia caviae (strain ATCC VR-813 / DSM 19441 / 03DC25 / GPIC) (Chlamydophila caviae).